A 280-amino-acid chain; its full sequence is F420-dependent methylenetetrahydromethanopterin dehydrogenase (280 aa).

The protein belongs to the MTD family.

It carries out the reaction 5,10-methylenetetrahydromethanopterin + oxidized coenzyme F420-(gamma-L-Glu)(n) + 2 H(+) = 5,10-methenyl-5,6,7,8-tetrahydromethanopterin + reduced coenzyme F420-(gamma-L-Glu)(n). Its pathway is one-carbon metabolism; methanogenesis from CO(2); 5,10-methylene-5,6,7,8-tetrahydromethanopterin from 5,10-methenyl-5,6,7,8-tetrahydromethanopterin (coenzyme F420 route): step 1/1. Its function is as follows. Catalyzes the reversible reduction of methenyl-H(4)MPT(+) to methylene-H(4)MPT. This is F420-dependent methylenetetrahydromethanopterin dehydrogenase from Methanoculleus marisnigri (strain ATCC 35101 / DSM 1498 / JR1).